The chain runs to 408 residues: Argininosuccinate synthase (408 aa).

14-22 (AYSGGLDTS) is an ATP binding site. Positions 92 and 97 each coordinate L-citrulline. G122 serves as a coordination point for ATP. The L-aspartate site is built by T124, N128, and D129. N128 lines the L-citrulline pocket. R132, S181, S190, E266, and Y278 together coordinate L-citrulline.

Belongs to the argininosuccinate synthase family. Type 1 subfamily. Homotetramer.

The protein localises to the cytoplasm. The catalysed reaction is L-citrulline + L-aspartate + ATP = 2-(N(omega)-L-arginino)succinate + AMP + diphosphate + H(+). Its pathway is amino-acid biosynthesis; L-arginine biosynthesis; L-arginine from L-ornithine and carbamoyl phosphate: step 2/3. The sequence is that of Argininosuccinate synthase from Moorella thermoacetica (strain ATCC 39073 / JCM 9320).